Here is a 328-residue protein sequence, read N- to C-terminus: Pantothenate kinase (328 aa).

The span at M1–P12 shows a compositional bias: polar residues. The segment at M1–S22 is disordered. G113 to S120 serves as a coordination point for ATP.

It belongs to the prokaryotic pantothenate kinase family.

It localises to the cytoplasm. It catalyses the reaction (R)-pantothenate + ATP = (R)-4'-phosphopantothenate + ADP + H(+). The protein operates within cofactor biosynthesis; coenzyme A biosynthesis; CoA from (R)-pantothenate: step 1/5. The protein is Pantothenate kinase of Corynebacterium efficiens (strain DSM 44549 / YS-314 / AJ 12310 / JCM 11189 / NBRC 100395).